Here is a 63-residue protein sequence, read N- to C-terminus: Potassium channel toxin MeuTXKalpha4 (63 aa).

The first 28 residues, 1–28 (MSRLLIFILTAVVLSVIIDILNNSKVEG), serve as a signal peptide directing secretion. Cystine bridges form between Cys35–Cys53, Cys39–Cys59, and Cys43–Cys61.

This sequence belongs to the short scorpion toxin superfamily. Potassium channel inhibitor family. In terms of tissue distribution, expressed by the venom gland.

Its subcellular location is the secreted. Its function is as follows. May block voltage-gated potassium channels (Kv). The sequence is that of Potassium channel toxin MeuTXKalpha4 from Mesobuthus eupeus (Lesser Asian scorpion).